The following is a 300-amino-acid chain: FeMo cofactor biosynthesis protein NifB (300 aa).

Positions 24–266 (HDKVGRVHLP…PQFRACGQCR (243 aa)) constitute a Radical SAM core domain. Residues C38, C42, and C45 each contribute to the [4Fe-4S] cluster site. S-adenosyl-L-methionine contacts are provided by G93, T144, and I196. Residues C262 and C265 each contribute to the [4Fe-4S] cluster site.

Belongs to the radical SAM superfamily. NifB family. As to quaternary structure, monomer. Requires [4Fe-4S] cluster as cofactor.

Its pathway is cofactor biosynthesis; Fe-Mo cofactor biosynthesis. Involved in the biosynthesis of the iron-molybdenum cofactor (FeMo-co or M-cluster) found in the dinitrogenase enzyme of the nitrogenase complex in nitrogen-fixing microorganisms. NifB catalyzes the crucial step of radical SAM-dependent carbide insertion that occurs concomitant with the insertion of a 9th sulfur and the rearrangement/coupling of two [4Fe-4S] clusters into a [8Fe-9S-C] cluster, the precursor to the M-cluster. This Methanocaldococcus jannaschii (strain ATCC 43067 / DSM 2661 / JAL-1 / JCM 10045 / NBRC 100440) (Methanococcus jannaschii) protein is FeMo cofactor biosynthesis protein NifB.